Here is a 484-residue protein sequence, read N- to C-terminus: Cobyric acid synthase (484 aa).

The 188-residue stretch at 248 to 435 (VLKVIVPVLP…LHGLFEGSQS (188 aa)) folds into the GATase cobBQ-type domain. Cys329 (nucleophile) is an active-site residue. His427 is a catalytic residue.

Belongs to the CobB/CobQ family. CobQ subfamily.

It participates in cofactor biosynthesis; adenosylcobalamin biosynthesis. In terms of biological role, catalyzes amidations at positions B, D, E, and G on adenosylcobyrinic A,C-diamide. NH(2) groups are provided by glutamine, and one molecule of ATP is hydrogenolyzed for each amidation. This Pseudomonas putida (strain W619) protein is Cobyric acid synthase.